The sequence spans 450 residues: Glycerol dehydrogenase 1 (450 aa).

NAD(+) is bound by residues aspartate 99, 155-159 (GKTMD), and 177-180 (TTAS). Substrate is bound at residue aspartate 182. NAD(+) contacts are provided by serine 186, leucine 188, and tyrosine 192. Aspartate 232, histidine 315, and histidine 333 together coordinate substrate. Positions 232, 315, and 333 each coordinate Zn(2+).

The protein belongs to the iron-containing alcohol dehydrogenase family. Zn(2+) is required as a cofactor.

It localises to the mitochondrion. The catalysed reaction is glycerol + NAD(+) = dihydroxyacetone + NADH + H(+). Its pathway is polyol metabolism; glycerol fermentation; glycerone phosphate from glycerol (oxidative route): step 1/2. In terms of biological role, glycerol dehydrogenase involved in the assimilation of glycerol. This is Glycerol dehydrogenase 1 (gld1) from Schizosaccharomyces pombe (strain 972 / ATCC 24843) (Fission yeast).